Reading from the N-terminus, the 578-residue chain is Phenylalanine--tRNA ligase beta subunit (578 aa).

The B5 domain occupies 292 to 370 (FDTDEKSVSH…RAYGFDNLEP (79 aa)). Mg(2+) contacts are provided by Asp-348, Asp-354, Asp-357, and Asp-358.

It belongs to the phenylalanyl-tRNA synthetase beta subunit family. Type 2 subfamily. As to quaternary structure, tetramer of two alpha and two beta subunits. Requires Mg(2+) as cofactor.

It localises to the cytoplasm. The enzyme catalyses tRNA(Phe) + L-phenylalanine + ATP = L-phenylalanyl-tRNA(Phe) + AMP + diphosphate + H(+). In Halorubrum lacusprofundi (strain ATCC 49239 / DSM 5036 / JCM 8891 / ACAM 34), this protein is Phenylalanine--tRNA ligase beta subunit.